We begin with the raw amino-acid sequence, 541 residues long: Sorting nexin-27 (541 aa).

Residues 1–42 are disordered; it reads MADEDGEGIHPSAPHRNGGGGGGGGSGLHCAGNGGGGGGGPR. Residues 17–41 show a composition bias toward gly residues; it reads NGGGGGGGGSGLHCAGNGGGGGGGP. In terms of domain architecture, PDZ spans 43–136; that stretch reads VVRIVKSESG…ELILTVLSVP (94 aa). Ser51 and Ser62 each carry phosphoserine. In terms of domain architecture, PX spans 161–269; it reads QAVPISVPRY…EFLSESDENY (109 aa). A Ras-associating domain is found at 273 to 362; it reads SDVELRVALP…TCLTIRKWLF (90 aa). An FERM-like region F1 region spans residues 273–362; the sequence is SDVELRVALP…TCLTIRKWLF (90 aa). The FERM-like region F2 stretch occupies residues 373–421; that stretch reads NDLAVTYFFHQAVDDVKKGYIKAEEKSYQLQKLYEQRKMVMYLNMLRTC. The FERM-like region F3 stretch occupies residues 425–525; the sequence is NEIIFPHCAC…RVFCELKWRK (101 aa).

This sequence belongs to the sorting nexin family. In terms of assembly, core component of the SNX27-retromer, a multiprotein complex composed of SNX27, the WASH complex and the retromer complex. Interacts (via PDZ domain) with a number of target transmembrane proteins (via PDZ-binding motif): ABCC4, ADRB2, ARHGEF7, GRIA1, GRIA2, GRIN1, GRIN2A GRIN2C, KCNJ6, KCNJ9 and SLC2A1/GLUT1. Interacts (via the FERM-like regions) with the WASH complex. Interacts with SNX1. Interacts with CYTIP. Isoform 1 and isoform 2 directly interact with DGKZ. Isoform 1 and isoform 2 interact with HT4R isoform 5-HTA(A). Interacts with MCC. Interacts (via PDZ domains) with SLC9A3; directs SLC9A3 membrane insertion from early endosomes to the plasma membrane. Widely expressed. Expressed in cells of hematopoietic origin (at protein level).

The protein resides in the early endosome membrane. The protein localises to the cytoplasm. Its subcellular location is the cytosol. Involved in the retrograde transport from endosome to plasma membrane, a trafficking pathway that promotes the recycling of internalized transmembrane proteins. Following internalization, endocytosed transmembrane proteins are delivered to early endosomes and recycled to the plasma membrane instead of being degraded in lysosomes. SNX27 specifically binds and directs sorting of a subset of transmembrane proteins containing a PDZ-binding motif at the C-terminus: following interaction with target transmembrane proteins, associates with the retromer complex, preventing entry into the lysosomal pathway, and promotes retromer-tubule based plasma membrane recycling. SNX27 also binds with the WASH complex. Interacts with membranes containing phosphatidylinositol-3-phosphate (PtdIns(3P)). May participate in establishment of natural killer cell polarity. Recruits CYTIP to early endosomes. This is Sorting nexin-27 (SNX27) from Homo sapiens (Human).